A 624-amino-acid polypeptide reads, in one-letter code: Aeromonas extracellular serine protease (624 aa).

The signal sequence occupies residues 1 to 24; that stretch reads MKQTSLALAITALLSTLPSALVQA. A disulfide bridge links C28 with C48. N53 serves as a coordination point for Ca(2+). Residues 59 to 421 enclose the Peptidase S8 domain; sequence QWYLLNSGQD…GKVRDVKGLE (363 aa). The active-site Charge relay system is the D102. Ca(2+) is bound at residue D111. The segment at 116–140 is disordered; that stretch reads VRPGSKNVVTGSDDPTPTDPDTAHG. H139 functions as the Charge relay system in the catalytic mechanism. The Ca(2+) site is built by V150, N152, I154, T156, D321, L322, G324, M327, N330, and C350. A disulfide bond links C325 and C350. S360 (charge relay system) is an active-site residue. The P/Homo B domain maps to 456-622; it reads LPPLVQLPWQ…SLRVLGHDAN (167 aa). 6 residues coordinate Ca(2+): D478, D512, D577, A579, N602, and N603.

This sequence belongs to the peptidase S8 family. Furin subfamily. In terms of assembly, forms a complex with the chaperone ORF2 in the periplasm. After translocation of the ASP-ORF2 complex from the periplasm to the extracellular space, the complex is dissociated in a pH-dependent manner. The cofactor is Ca(2+).

It localises to the periplasm. The protein localises to the secreted. The catalysed reaction is Cleavage of -Lys-Lys-|-Xaa and -Lys-Arg-|-Xaa bonds.. Folding, maturation and production of the active form of the protease by the cell requires a protein (ORF2), encoded just downstream of asp, which acts as a chaperone. Formation of a complex with ORF2 in the periplasm also inactivates the protease activity and likely protects ASP from intrinsic proteases. In vitro, protease activity is inhibited by human alpha-2-macroglobulin, suggesting that this inhibitor can impede ASP virulence activities in A.sobria infection sites. However, slow ASP inhibition by alpha-2-macroglobulin in plasma may indicate insufficient ASP control in vivo. Activity is inhibited by serine protease inhibitors such as 4-(2-aminoethyl)-benzenesulfonyl fluoride (AEBSF) and diisopropyl fluorophosphate (DFP). Not inhibited by metallo-protease inhibitors and cysteine protease inhibitors. The treatment with reagents to modify sulfhydryl group do not reduce the activity. Functionally, exhibits serine protease activity. Preferentially cleaves the peptide bond following two basic residues, one of which is Lys, but does not recognize the bond following a single basic residue. Probable potent virulence factor that cleaves various host plasma proteins, including prekallikrein, prothrombin and fibrinogen. ASP induces vascular leakage and reduction in blood pressure by activating the host plasma kallikrein/kinin system. It affects the host coagulation system during infection through activation of prothrombin to alpha-thrombin and degradation of fibrinogen, which impairs plasma clottability. It also hydrolyzes the complement component C5, releasing the C5a anaphylatoxin, which causes the formation of pus and edema. In addition, degrades its external chaperone ORF2 after the secretion of the ASP-ORF2 complex. This is Aeromonas extracellular serine protease from Aeromonas sobria.